A 238-amino-acid polypeptide reads, in one-letter code: MMKVLLKGQTLLALMISLSLSSLLLLSISHFYVQIQTQNQHMLLHLKLQAELQRTLQLIGKDLRRLGFRALNAKLTESNLSLFELDEQGTAIFISQEDNAPPNSCVLFFYDLNKNGCIGKGSPKTCMKKGKNTSKSSTEELFGYKVSNKMIKTKLTYQSVIPTNCTAETCKRAFQQTACNAGGGWADLLDNNEYEITRLQFNWLIEGKGLEIKLKGNLKQTPNISYETSLVVVLWNQK.

Residues 10–33 (TLLALMISLSLSSLLLLSISHFYV) form a helical membrane-spanning segment.

The protein resides in the membrane. This is an uncharacterized protein from Haemophilus influenzae (strain ATCC 51907 / DSM 11121 / KW20 / Rd).